Here is a 373-residue protein sequence, read N- to C-terminus: Alanine dehydrogenase (373 aa).

Substrate is bound by residues Arg-15 and Lys-74. The active-site Proton donor/acceptor is His-95. NAD(+) is bound by residues Ser-133, 177–178, Asp-197, Ser-219, 238–239, 266–269, and 298–301; these read QA, VL, IAID, and VANM. Asp-269 functions as the Proton donor/acceptor in the catalytic mechanism.

The protein belongs to the AlaDH/PNT family. In terms of assembly, homohexamer. Trimer of dimer.

The catalysed reaction is L-alanine + NAD(+) + H2O = pyruvate + NH4(+) + NADH + H(+). It participates in amino-acid degradation; L-alanine degradation via dehydrogenase pathway; NH(3) and pyruvate from L-alanine: step 1/1. Catalyzes the reversible reductive amination of pyruvate to L-alanine. May play a role in cell wall synthesis as L-alanine is an important constituent of the peptidoglycan layer. This chain is Alanine dehydrogenase (ald), found in Staphylococcus haemolyticus (strain JCSC1435).